A 302-amino-acid polypeptide reads, in one-letter code: Short-chain dehydrogenase/reductase 3 (302 aa).

Helical transmembrane passes span 9-29 (LVVF…GLVL), 170-190 (IVCL…DYCT), 195-215 (AFAF…VSAT), and 253-273 (AVQL…LIIL). Ser175 is a binding site for substrate. Tyr188 acts as the Proton acceptor in catalysis.

Belongs to the short-chain dehydrogenases/reductases (SDR) family. In terms of tissue distribution, in the retina, expressed in cone but not rod outer segments.

It is found in the membrane. It carries out the reaction all-trans-retinol + NADP(+) = all-trans-retinal + NADPH + H(+). Catalyzes the reduction of all-trans-retinal to all-trans-retinol in the presence of NADPH. This chain is Short-chain dehydrogenase/reductase 3 (DHRS3), found in Bos taurus (Bovine).